Reading from the N-terminus, the 427-residue chain is Putative F-box/FBD/LRR-repeat protein At4g13965 (427 aa).

Residues 13-61 (ADRISQLPEALIIQILSLLPTEVAVTTSVLSKQWQFLWKMLPKLNFDSL) form the F-box domain. LRR repeat units lie at residues 67 to 93 (FKTFSKNVKRALLSHKAPVLHSLHLIV), 98 to 122 (CNSMNTAKLIGIAFACNLRKLVLEV), 141 to 168 (TLELKYSILMDVPSSICLKSLRTLHLHY), 169 to 194 (VDFKDNESALNLLSGCPNLENLVVHR), 213 to 241 (LTIYTSSTVDPRAGYVINSPSLTYLKIVG), and 258 to 284 (SMIVSSQIINKNLLESLTSVKRLFLEF). An FBD domain is found at 346 to 396 (KWNKPKIVPECLLFHLETFMWKGYEWKRNDETEVAKYILSNTNRLKRATFF).

This chain is Putative F-box/FBD/LRR-repeat protein At4g13965, found in Arabidopsis thaliana (Mouse-ear cress).